A 275-amino-acid chain; its full sequence is Putative protein A464R (275 aa).

One can recognise an RNase III domain in the interval 51–175 (KEDVEYLIGM…LMGAIYFDLG (125 aa)). The 69-residue stretch at 201–269 (NYKDRLLKHT…SKIALHTMGV (69 aa)) folds into the DRBM domain.

This sequence belongs to the ribonuclease III family.

In Chlorella (PBCV-1), this protein is Putative protein A464R.